The primary structure comprises 255 residues: 3-deoxy-manno-octulosonate cytidylyltransferase (255 aa).

This sequence belongs to the KdsB family.

It localises to the cytoplasm. The enzyme catalyses 3-deoxy-alpha-D-manno-oct-2-ulosonate + CTP = CMP-3-deoxy-beta-D-manno-octulosonate + diphosphate. It participates in nucleotide-sugar biosynthesis; CMP-3-deoxy-D-manno-octulosonate biosynthesis; CMP-3-deoxy-D-manno-octulosonate from 3-deoxy-D-manno-octulosonate and CTP: step 1/1. The protein operates within bacterial outer membrane biogenesis; lipopolysaccharide biosynthesis. In terms of biological role, activates KDO (a required 8-carbon sugar) for incorporation into bacterial lipopolysaccharide in Gram-negative bacteria. This chain is 3-deoxy-manno-octulosonate cytidylyltransferase, found in Psychromonas ingrahamii (strain DSM 17664 / CCUG 51855 / 37).